A 193-amino-acid polypeptide reads, in one-letter code: Outer-membrane lipoprotein LolB (193 aa).

An N-terminal signal peptide occupies residues 1 to 21; it reads MRPARRFLAALACVAGALLSA. C22 is lipidated: N-palmitoyl cysteine. C22 is lipidated: S-diacylglycerol cysteine.

This sequence belongs to the LolB family. As to quaternary structure, monomer.

It is found in the cell outer membrane. Its function is as follows. Plays a critical role in the incorporation of lipoproteins in the outer membrane after they are released by the LolA protein. This Azoarcus sp. (strain BH72) protein is Outer-membrane lipoprotein LolB.